The primary structure comprises 381 residues: Dual-specificity RNA methyltransferase RlmN (381 aa).

E86 functions as the Proton acceptor in the catalytic mechanism. Positions 105–338 constitute a Radical SAM core domain; sequence RHARYTICVS…CTIRQSKGLD (234 aa). An intrachain disulfide couples C112 to C343. [4Fe-4S] cluster is bound by residues C119, C123, and C126. S-adenosyl-L-methionine is bound by residues 169–170, S201, 224–226, and N300; these read GE and SLH. C343 acts as the S-methylcysteine intermediate in catalysis. The interval 351 to 381 is disordered; the sequence is ENPKFRANVSGNSAAKTEEKPTNDKTNVSKK.

This sequence belongs to the radical SAM superfamily. RlmN family. [4Fe-4S] cluster is required as a cofactor.

It localises to the cytoplasm. It catalyses the reaction adenosine(2503) in 23S rRNA + 2 reduced [2Fe-2S]-[ferredoxin] + 2 S-adenosyl-L-methionine = 2-methyladenosine(2503) in 23S rRNA + 5'-deoxyadenosine + L-methionine + 2 oxidized [2Fe-2S]-[ferredoxin] + S-adenosyl-L-homocysteine. It carries out the reaction adenosine(37) in tRNA + 2 reduced [2Fe-2S]-[ferredoxin] + 2 S-adenosyl-L-methionine = 2-methyladenosine(37) in tRNA + 5'-deoxyadenosine + L-methionine + 2 oxidized [2Fe-2S]-[ferredoxin] + S-adenosyl-L-homocysteine. Functionally, specifically methylates position 2 of adenine 2503 in 23S rRNA and position 2 of adenine 37 in tRNAs. m2A2503 modification seems to play a crucial role in the proofreading step occurring at the peptidyl transferase center and thus would serve to optimize ribosomal fidelity. This chain is Dual-specificity RNA methyltransferase RlmN, found in Campylobacter concisus (strain 13826).